A 139-amino-acid polypeptide reads, in one-letter code: Large ribosomal subunit protein uL13 (139 aa).

Belongs to the universal ribosomal protein uL13 family. As to quaternary structure, part of the 50S ribosomal subunit.

This protein is one of the early assembly proteins of the 50S ribosomal subunit, although it is not seen to bind rRNA by itself. It is important during the early stages of 50S assembly. This is Large ribosomal subunit protein uL13 from Wolinella succinogenes (strain ATCC 29543 / DSM 1740 / CCUG 13145 / JCM 31913 / LMG 7466 / NCTC 11488 / FDC 602W) (Vibrio succinogenes).